The following is a 165-amino-acid chain: Regulatory protein RecX (165 aa).

Belongs to the RecX family.

It localises to the cytoplasm. Functionally, modulates RecA activity. This chain is Regulatory protein RecX, found in Cronobacter sakazakii (strain ATCC BAA-894) (Enterobacter sakazakii).